The primary structure comprises 176 residues: UPF0262 protein GbCGDNIH1_1393 (176 aa).

Belongs to the UPF0262 family.

The chain is UPF0262 protein GbCGDNIH1_1393 from Granulibacter bethesdensis (strain ATCC BAA-1260 / CGDNIH1).